The primary structure comprises 372 residues: NADH-quinone oxidoreductase subunit D (372 aa).

The protein belongs to the complex I 49 kDa subunit family. In terms of assembly, NDH-1 is composed of 14 different subunits. Subunits NuoB, C, D, E, F, and G constitute the peripheral sector of the complex.

It localises to the cell inner membrane. The catalysed reaction is a quinone + NADH + 5 H(+)(in) = a quinol + NAD(+) + 4 H(+)(out). In terms of biological role, NDH-1 shuttles electrons from NADH, via FMN and iron-sulfur (Fe-S) centers, to quinones in the respiratory chain. The immediate electron acceptor for the enzyme in this species is believed to be ubiquinone. Couples the redox reaction to proton translocation (for every two electrons transferred, four hydrogen ions are translocated across the cytoplasmic membrane), and thus conserves the redox energy in a proton gradient. This Desulfotalea psychrophila (strain LSv54 / DSM 12343) protein is NADH-quinone oxidoreductase subunit D.